The chain runs to 331 residues: Undecaprenyl-phosphate 4-deoxy-4-formamido-L-arabinose transferase (331 aa).

The next 2 membrane-spanning stretches (helical) occupy residues 236–256 (LSIV…FLIL) and 270–290 (VFPL…GLGL).

This sequence belongs to the glycosyltransferase 2 family.

It is found in the cell inner membrane. The catalysed reaction is UDP-4-deoxy-4-formamido-beta-L-arabinose + di-trans,octa-cis-undecaprenyl phosphate = 4-deoxy-4-formamido-alpha-L-arabinopyranosyl di-trans,octa-cis-undecaprenyl phosphate + UDP. It participates in glycolipid biosynthesis; 4-amino-4-deoxy-alpha-L-arabinose undecaprenyl phosphate biosynthesis; 4-amino-4-deoxy-alpha-L-arabinose undecaprenyl phosphate from UDP-4-deoxy-4-formamido-beta-L-arabinose and undecaprenyl phosphate: step 1/2. The protein operates within bacterial outer membrane biogenesis; lipopolysaccharide biosynthesis. Functionally, catalyzes the transfer of 4-deoxy-4-formamido-L-arabinose from UDP to undecaprenyl phosphate. The modified arabinose is attached to lipid A and is required for resistance to polymyxin and cationic antimicrobial peptides. This Shewanella sediminis (strain HAW-EB3) protein is Undecaprenyl-phosphate 4-deoxy-4-formamido-L-arabinose transferase.